The primary structure comprises 266 residues: 4-hydroxy-tetrahydrodipicolinate reductase (266 aa).

Residue 10-15 participates in NAD(+) binding; sequence GPRGRM. Lys38 lines the NADP(+) pocket. NAD(+) contacts are provided by residues 99–101 and 125–128; these read GTT and APNF. Catalysis depends on His155, which acts as the Proton donor/acceptor. Residue His156 coordinates (S)-2,3,4,5-tetrahydrodipicolinate. Lys159 (proton donor) is an active-site residue. 165 to 166 is a (S)-2,3,4,5-tetrahydrodipicolinate binding site; that stretch reads GT.

It belongs to the DapB family.

Its subcellular location is the cytoplasm. It carries out the reaction (S)-2,3,4,5-tetrahydrodipicolinate + NAD(+) + H2O = (2S,4S)-4-hydroxy-2,3,4,5-tetrahydrodipicolinate + NADH + H(+). The catalysed reaction is (S)-2,3,4,5-tetrahydrodipicolinate + NADP(+) + H2O = (2S,4S)-4-hydroxy-2,3,4,5-tetrahydrodipicolinate + NADPH + H(+). Its pathway is amino-acid biosynthesis; L-lysine biosynthesis via DAP pathway; (S)-tetrahydrodipicolinate from L-aspartate: step 4/4. Its function is as follows. Catalyzes the conversion of 4-hydroxy-tetrahydrodipicolinate (HTPA) to tetrahydrodipicolinate. In Bacillus mycoides (strain KBAB4) (Bacillus weihenstephanensis), this protein is 4-hydroxy-tetrahydrodipicolinate reductase.